Reading from the N-terminus, the 278-residue chain is MSSKSQLTYGARASKHPNPLAKRLFEIAEAKKTNVTVSADVTTTRELLDLADRLGPYIAVIKTHIDILTDFSVDTINGLNVLAQKHNFLIFEDRKFIDIGNTVQKQYHGGALRISEWAHIINCSVLPGEGIVEALAQTASAQDFPYGPERGLLVLAEMTSKGSLATGEYTKASVDYARKYKNFVMGFVSTRALTEVQSDVSSASEDEDFVVFTTGVNLSSKGDKLGQQYQTPASAIGRGADFIIAGRGIYAAPDPVEAAQRYQKEGWEAYMARVCGKS.

Substrate is bound by residues D40, 62–64 (KTH), 93–102 (DRKFIDIGNT), Y229, and R247. Residue K95 is the Proton donor of the active site.

It belongs to the OMP decarboxylase family.

The enzyme catalyses orotidine 5'-phosphate + H(+) = UMP + CO2. It functions in the pathway pyrimidine metabolism; UMP biosynthesis via de novo pathway; UMP from orotate: step 2/2. This Aspergillus fumigatus (strain ATCC MYA-4609 / CBS 101355 / FGSC A1100 / Af293) (Neosartorya fumigata) protein is Orotidine 5'-phosphate decarboxylase (pyrG).